The following is a 192-amino-acid chain: MRPTDTSNFAPAEISKRKVRRVKANGRERARMHGLNNALDMLREYIPITTQHQKLSKIETLRLARNYIDALQRMLQTNEQPTPLEYAHTLANGLSQTTTNMLANLLQVQPRQLLPPSQFDIFSDPSHHQLHPSHPPPHSSFSSSSPSSSCSPPQYYYSPTQPSAAPLQGSCDPQYQQMYHQHSHQNTFNYSP.

One can recognise a bHLH domain in the interval Val-19–Leu-71. Residues Pro-116–Pro-192 are disordered. The segment covering Ser-139 to Ser-163 has biased composition (low complexity).

In terms of tissue distribution, expressed in neuroblasts of the AB lineage. More specifically in precursors of the embryonic ventral cord motor neurons. Expressed to a lesser degree in the EMS lineage which generates mostly endoderm and mesoderm tissues.

It is found in the nucleus. Its function is as follows. Acts as a transcriptional regulator whose activity is required for several aspects of motor neuron fate specification, including cell division patterns, proper spatiotemporal expression of fate-specific markers, and normal axonal morphology and pathfinding. Involved in regulating glial specification. The polypeptide is Neurogenic differentiation factor 1 (cnd-1) (Caenorhabditis elegans).